The sequence spans 114 residues: Large ribosomal subunit protein bL19 (114 aa).

It belongs to the bacterial ribosomal protein bL19 family.

Functionally, this protein is located at the 30S-50S ribosomal subunit interface and may play a role in the structure and function of the aminoacyl-tRNA binding site. This Heliobacterium modesticaldum (strain ATCC 51547 / Ice1) protein is Large ribosomal subunit protein bL19.